A 122-amino-acid chain; its full sequence is Large ribosomal subunit protein uL14 (122 aa).

The protein belongs to the universal ribosomal protein uL14 family. As to quaternary structure, part of the 50S ribosomal subunit. Forms a cluster with proteins L3 and L19. In the 70S ribosome, L14 and L19 interact and together make contacts with the 16S rRNA in bridges B5 and B8.

Its function is as follows. Binds to 23S rRNA. Forms part of two intersubunit bridges in the 70S ribosome. The polypeptide is Large ribosomal subunit protein uL14 (Marinomonas sp. (strain MWYL1)).